The sequence spans 706 residues: Choline transporter-like protein 2 (706 aa).

Residues methionine 1–aspartate 33 are Cytoplasmic-facing. Phosphothreonine is present on threonine 14. The helical transmembrane segment at valine 34–alanine 54 threads the bilayer. At tryptophan 55–tryptophan 232 the chain is on the extracellular side. 2 N-linked (GlcNAc...) asparagine glycosylation sites follow: asparagine 187 and asparagine 200. Residues tyrosine 233–leucine 253 form a helical membrane-spanning segment. The Cytoplasmic segment spans residues arginine 254–leucine 256. The chain crosses the membrane as a helical span at residues alanine 257 to phenylalanine 277. Residues histidine 278–tryptophan 315 lie on the Extracellular side of the membrane. Residues methionine 316–leucine 336 form a helical membrane-spanning segment. Residues arginine 337–proline 364 lie on the Cytoplasmic side of the membrane. The chain crosses the membrane as a helical span at residues leucine 365 to leucine 385. At serine 386 to arginine 440 the chain is on the extracellular side. Residues alanine 441–leucine 461 traverse the membrane as a helical segment. Residues alanine 462–serine 504 are Cytoplasmic-facing. A helical transmembrane segment spans residues leucine 505–leucine 525. Over aspartate 526–tyrosine 563 the chain is Extracellular. A helical transmembrane segment spans residues isoleucine 564–leucine 584. The Cytoplasmic segment spans residues methionine 585 to aspartate 599. A helical transmembrane segment spans residues phenylalanine 600–phenylalanine 620. The Extracellular segment spans residues phenylalanine 621–tyrosine 638. A helical transmembrane segment spans residues tryptophan 639–valine 659. At tyrosine 660 to serine 706 the chain is on the cytoplasmic side.

The protein belongs to the CTL (choline transporter-like) family. In terms of assembly, interacts with COCH. In terms of processing, N-glycosylated.

The protein resides in the cell membrane. It localises to the mitochondrion outer membrane. The catalysed reaction is choline(out) + n H(+)(in) = choline(in) + n H(+)(out). The enzyme catalyses ethanolamine(out) + n H(+)(in) = ethanolamine(in) + n H(+)(out). Choline/H+ antiporter, mainly in mitochodria. Also acts as a low-affinity ethanolamine/H+ antiporter, regulating the supply of extracellular ethanolamine (Etn) for the CDP-Etn pathway, redistribute intracellular Etn and balance the CDP-Cho and CDP-Etn arms of the Kennedy pathway. The polypeptide is Choline transporter-like protein 2 (SLC44A2) (Sus scrofa (Pig)).